We begin with the raw amino-acid sequence, 276 residues long: MAIRVYKPTTPGRRNASVSDFSDLTRSTPEKSLIRKNSKTGGRNNYGRMTSRHRGGGHKRQYRLIDFRRWDKDGVPATVAQIEYDPNRSARIALLHYADGEKRYIIAPEGIKQGDRIETGANADIKPGNNLPLRNIPTGTVVHAIELRPLGGAKIARSAGAAVQLVAKDGAYAQLRMPSGEIRNVDARCRATVGEVGNSDHANIQLGKAGRARWMGKRPITRGESMNPVDHPHGGRTRGGKPPVSPWGKGEVRTRRPKKASNKMIVRRRPNGKNRK.

Disordered stretches follow at residues 1-58 (MAIR…GGGH) and 218-276 (RPIT…KNRK). Over residues 16-27 (ASVSDFSDLTRS) the composition is skewed to polar residues. The span at 255–276 (RRPKKASNKMIVRRRPNGKNRK) shows a compositional bias: basic residues.

It belongs to the universal ribosomal protein uL2 family. As to quaternary structure, part of the 50S ribosomal subunit. Forms a bridge to the 30S subunit in the 70S ribosome.

One of the primary rRNA binding proteins. Required for association of the 30S and 50S subunits to form the 70S ribosome, for tRNA binding and peptide bond formation. It has been suggested to have peptidyltransferase activity; this is somewhat controversial. Makes several contacts with the 16S rRNA in the 70S ribosome. The sequence is that of Large ribosomal subunit protein uL2 from Bifidobacterium animalis subsp. lactis (strain AD011).